Reading from the N-terminus, the 245-residue chain is tRNA1(Val) (adenine(37)-N6)-methyltransferase (245 aa).

It belongs to the methyltransferase superfamily. tRNA (adenine-N(6)-)-methyltransferase family.

It is found in the cytoplasm. It carries out the reaction adenosine(37) in tRNA1(Val) + S-adenosyl-L-methionine = N(6)-methyladenosine(37) in tRNA1(Val) + S-adenosyl-L-homocysteine + H(+). In terms of biological role, specifically methylates the adenine in position 37 of tRNA(1)(Val) (anticodon cmo5UAC). The polypeptide is tRNA1(Val) (adenine(37)-N6)-methyltransferase (Salmonella arizonae (strain ATCC BAA-731 / CDC346-86 / RSK2980)).